Here is a 321-residue protein sequence, read N- to C-terminus: Torsin-2A (321 aa).

The signal sequence occupies residues 1–26; the sequence is MAAATRGCRPWGSLLGLLGLVSAAAA. 93-100 provides a ligand contact to ATP; it reads GWTGTGKS. Residue Asn-149 is glycosylated (N-linked (GlcNAc...) asparagine).

Belongs to the ClpA/ClpB family. Torsin subfamily. In terms of assembly, homohexamer. Interacts with TOR1AIP1. In terms of tissue distribution, isoform 1 is expressed ubiquitously, except in cardiac and endothelial tissues.

The protein localises to the endoplasmic reticulum lumen. This Homo sapiens (Human) protein is Torsin-2A (TOR2A).